Reading from the N-terminus, the 413-residue chain is Phosphoribosylamine--glycine ligase (413 aa).

Residues 108 to 310 (KQLMDKYRIP…LMQLIIDLEN (203 aa)) form the ATP-grasp domain. 134-190 (VETCDLPIVIKKDGLAAGKGVIIAFTREDALDGVKKIYQEEKGKVVFESYLEGEEFS) provides a ligand contact to ATP. Residues Glu-280 and Asn-282 each contribute to the Mg(2+) site.

It belongs to the GARS family. The cofactor is Mg(2+). It depends on Mn(2+) as a cofactor.

The enzyme catalyses 5-phospho-beta-D-ribosylamine + glycine + ATP = N(1)-(5-phospho-beta-D-ribosyl)glycinamide + ADP + phosphate + H(+). The protein operates within purine metabolism; IMP biosynthesis via de novo pathway; N(1)-(5-phospho-D-ribosyl)glycinamide from 5-phospho-alpha-D-ribose 1-diphosphate: step 2/2. The protein is Phosphoribosylamine--glycine ligase of Staphylococcus epidermidis (strain ATCC 12228 / FDA PCI 1200).